We begin with the raw amino-acid sequence, 189 residues long: uncharacterized protein (189 aa).

Positions 1-19 (MKRVLFFLLMIFVSFGVIA) are cleaved as a signal peptide.

This is an uncharacterized protein from Escherichia coli (strain K12).